Consider the following 228-residue polypeptide: 5'-methylthioadenosine/S-adenosylhomocysteine nucleosidase (228 aa).

E11 serves as the catalytic Proton acceptor. Residues G77, I151, and M172 to E173 each bind substrate. D196 acts as the Proton donor in catalysis.

Belongs to the PNP/UDP phosphorylase family. MtnN subfamily.

The enzyme catalyses S-adenosyl-L-homocysteine + H2O = S-(5-deoxy-D-ribos-5-yl)-L-homocysteine + adenine. The catalysed reaction is S-methyl-5'-thioadenosine + H2O = 5-(methylsulfanyl)-D-ribose + adenine. It catalyses the reaction 5'-deoxyadenosine + H2O = 5-deoxy-D-ribose + adenine. It participates in amino-acid biosynthesis; L-methionine biosynthesis via salvage pathway; S-methyl-5-thio-alpha-D-ribose 1-phosphate from S-methyl-5'-thioadenosine (hydrolase route): step 1/2. Its function is as follows. Catalyzes the irreversible cleavage of the glycosidic bond in both 5'-methylthioadenosine (MTA) and S-adenosylhomocysteine (SAH/AdoHcy) to adenine and the corresponding thioribose, 5'-methylthioribose and S-ribosylhomocysteine, respectively. Also cleaves 5'-deoxyadenosine, a toxic by-product of radical S-adenosylmethionine (SAM) enzymes, into 5-deoxyribose and adenine. This is 5'-methylthioadenosine/S-adenosylhomocysteine nucleosidase from Staphylococcus saprophyticus subsp. saprophyticus (strain ATCC 15305 / DSM 20229 / NCIMB 8711 / NCTC 7292 / S-41).